The primary structure comprises 2379 residues: Serine/threonine-protein kinase MEC1 (2379 aa).

Positions 1410–1955 constitute an FAT domain; the sequence is LLANKSLETN…LWHISVLCQS (546 aa). Residues 2060 to 2363 enclose the PI3K/PI4K catalytic domain; the sequence is FASSYKIFSS…QAETLIQEAT (304 aa). Residues 2066 to 2072 form a G-loop region; that stretch reads IFSSLKK. Residues 2232–2240 are catalytic loop; sequence GLGDRHCEN. An activation loop region spans residues 2252-2276; the sequence is HVDFDCLFEKGENLPVPEIVPFRLT. The 33-residue stretch at 2347–2379 folds into the FATC domain; that stretch reads LLLSVSGQAETLIQEATSTENLSKMYIGWLPFW.

The protein belongs to the PI3/PI4-kinase family. ATM subfamily.

The protein resides in the nucleus. It carries out the reaction L-seryl-[protein] + ATP = O-phospho-L-seryl-[protein] + ADP + H(+). The enzyme catalyses L-threonyl-[protein] + ATP = O-phospho-L-threonyl-[protein] + ADP + H(+). In terms of biological role, serine/threonine protein kinase which activates checkpoint signaling upon genotoxic stresses such as ionizing radiation (IR), ultraviolet light (UV), or DNA replication stalling, thereby acting as a DNA damage sensor. Recognizes the substrate consensus sequence [ST]-Q. Recruited to DNA lesions in order to initiate the DNA repair by homologous recombination. Phosphorylates histone H2A to form H2AS128ph (gamma-H2A) at sites of DNA damage, also involved in the regulation of DNA damage response mechanism. Required for cell growth and meiotic recombination. The protein is Serine/threonine-protein kinase MEC1 (MEC1) of Candida glabrata (strain ATCC 2001 / BCRC 20586 / JCM 3761 / NBRC 0622 / NRRL Y-65 / CBS 138) (Yeast).